Reading from the N-terminus, the 158-residue chain is NADH-quinone oxidoreductase subunit B (158 aa).

[4Fe-4S] cluster is bound by residues Cys-36, Cys-37, Cys-101, and Cys-131.

The protein belongs to the complex I 20 kDa subunit family. As to quaternary structure, NDH-1 is composed of 14 different subunits. Subunits NuoB, C, D, E, F, and G constitute the peripheral sector of the complex. It depends on [4Fe-4S] cluster as a cofactor.

It is found in the cell inner membrane. It catalyses the reaction a quinone + NADH + 5 H(+)(in) = a quinol + NAD(+) + 4 H(+)(out). NDH-1 shuttles electrons from NADH, via FMN and iron-sulfur (Fe-S) centers, to quinones in the respiratory chain. The immediate electron acceptor for the enzyme in this species is believed to be ubiquinone. Couples the redox reaction to proton translocation (for every two electrons transferred, four hydrogen ions are translocated across the cytoplasmic membrane), and thus conserves the redox energy in a proton gradient. In Francisella tularensis subsp. tularensis (strain FSC 198), this protein is NADH-quinone oxidoreductase subunit B.